Consider the following 410-residue polypeptide: Angiopoietin-related protein 4 (410 aa).

An N-terminal signal peptide occupies residues 1–23; the sequence is MRCAPTAGAALVLCAATAGLLSA. Residues 79 to 101 are disordered; it reads ACQGPKGKDAPFKDSEDRVPEGQ. Residues 84 to 98 show a composition bias toward basic and acidic residues; that stretch reads KGKDAPFKDSEDRVP. Residues 104–152 are a coiled coil; the sequence is ETLQSLQTQLKAQNSKIQQLFQKVAQQQRYLSKQNLRIQNLQSQIDLLA. N-linked (GlcNAc...) asparagine glycosylation is present at Asn181. Residues 183-405 enclose the Fibrinogen C-terminal domain; sequence THLHRPPRDC…ATTLLIQPME (223 aa). Cys192 and Cys220 form a disulfide bridge. N-linked (GlcNAc...) asparagine glycans are attached at residues Asn236 and Asn242. An intrachain disulfide couples Cys345 to Cys358.

As to quaternary structure, homooligomer; disulfide-linked via Cys residues in the N-terminal part of the protein. The homooligomer undergoes proteolytic processing to release the ANGPTL4 C-terminal chain, which circulates as a monomer. The homooligomer unprocessed form is able to interact with the extracellular matrix. In terms of processing, N-glycosylated. Post-translationally, forms disulfide-linked dimers and tetramers. Cleaved into a smaller N-terminal chain and a larger chain that contains the fibrinogen C-terminal domain; both cleaved and uncleaved forms are detected in the extracellular space. The cleaved form is not present within the cell. As to expression, detected in liver and kidney. Predominantly expressed in adipose tissue and is strongly up-regulated by fasting in white adipose tissue and liver. More abundant in areas of lower flow stress in the inner curvature compared to the outer curvature regions of the aorta (at protein level).

It localises to the secreted. The protein localises to the extracellular space. It is found in the extracellular matrix. Its function is as follows. Mediates inactivation of the lipoprotein lipase LPL, and thereby plays a role in the regulation of triglyceride clearance from the blood serum and in lipid metabolism. May also play a role in regulating glucose homeostasis and insulin sensitivity. Inhibits proliferation, migration, and tubule formation of endothelial cells and reduces vascular leakage. Upon heterologous expression, inhibits the adhesion of endothelial cell to the extracellular matrix (ECM), and inhibits the reorganization of the actin cytoskeleton, formation of actin stress fibers and focal adhesions in endothelial cells that have adhered to ANGPTL4-containing ECM (in vitro). Depending on context, may modulate tumor-related angiogenesis. In terms of biological role, mediates inactivation of the lipoprotein lipase LPL, and thereby plays an important role in the regulation of triglyceride clearance from the blood serum and in lipid metabolism. Has higher activity in LPL inactivation than the uncleaved protein. The chain is Angiopoietin-related protein 4 (Angptl4) from Mus musculus (Mouse).